The chain runs to 2116 residues: Myosin-2 heavy chain (2116 aa).

One can recognise a Myosin N-terminal SH3-like domain in the interval 30–82; sequence SDKRYIWYNPDPKERDSYECGEIVSETSDSFTFKTVDGQDRQVKKDDANQRNP. The Myosin motor domain maps to 86-759; it reads DGVEDMSELS…QLARIEEARE (674 aa). An N6,N6-dimethyllysine modification is found at lysine 130. Position 179-186 (179-186) interacts with ATP; that stretch reads GESGAGKT. Actin-binding regions lie at residues 638–660 and 738–752; these read LASL…IPNN and RFGI…GQLA. The 30-residue stretch at 762-791 folds into the IQ domain; sequence ISEIIKAIQAATRGWIARKVYKQAREHTVA. Residues 817 to 2116 adopt a coiled-coil conformation; the sequence is ARPLLKRRNF…MADFFGGFKA (1300 aa). 6 disordered regions span residues 1295–1314, 1363–1399, 1415–1444, 1711–1731, 1771–1791, and 1805–1844; these read VNEQ…KRKV, DKSV…SKKK, TAKK…DAKN, VRDQ…SKRR, LEDE…LESE, and NRSR…AAKL. Composition is skewed to basic and acidic residues over residues 1375–1399, 1415–1443, and 1722–1731; these read KNEE…SKKK, TAKK…DDAK, and RSELEDSKRR. Positions 1805–1832 are enriched in basic and acidic residues; the sequence is NRSRAEKDRKKYEKDLKDTKYKLNDEAA. Residues threonine 1823, threonine 1833, and threonine 2029 each carry the phosphothreonine; by MHCK modification.

It belongs to the TRAFAC class myosin-kinesin ATPase superfamily. Myosin family. Myosin-2 heavy chain is two-headed. It self-assembles into filaments. Hexamer of 2 heavy chain subunits (MHC), 2 alkali light chain subunits (MLC) and 2 regulatory light chain subunits (MLC-2). Associates with elmoA. Post-translationally, phosphorylation inhibits thick filament formation and reduces the actin-activated ATPase activity.

It localises to the cytoplasm. Its subcellular location is the cell cortex. In terms of biological role, myosin is a protein that binds to actin and has ATPase activity that is activated by actin. This is Myosin-2 heavy chain (mhcA) from Dictyostelium discoideum (Social amoeba).